Reading from the N-terminus, the 1053-residue chain is Serine/threonine-protein phosphatase 6 regulatory ankyrin repeat subunit A (1053 aa).

ANK repeat units follow at residues 40 to 69, 73 to 102, 106 to 135, 139 to 168, 172 to 201, 205 to 234, 238 to 267, 271 to 301, 305 to 334, 338 to 367, 371 to 400, 404 to 433, 437 to 466, 470 to 500, 504 to 534, 549 to 578, 582 to 611, 616 to 645, 652 to 681, 685 to 714, 718 to 747, 755 to 784, 787 to 817, 822 to 851, 855 to 885, 889 to 918, and 925 to 954; these read EKRT…RVNA, KWLT…DVNA, NWQT…NVNV, AGRT…NINA, KDRR…EVTC, KSYT…DMNE, YGNT…IVNQ, KGFT…DVNM, DGKT…VIDC, NGNT…DTAK, HGMF…DIDT, FGRT…DFNK, FGRS…SVND, RGCT…NPGI, QGYN…DVLM, ATIS…DLDV, SGRT…SILV, LKRT…PQNA, NGQT…NVDA, WGRT…KCLL, RGRT…SMDA, HGYT…FQKT, NAFS…SIVN, KGRT…QVNS, TGKT…ELTL, SKNT…DRNL, and ALQT…SVLA. Residues S1007 and S1011 each carry the phosphoserine modification.

As to quaternary structure, protein phosphatase 6 (PP6) holoenzyme is proposed to be a heterotrimeric complex formed by the catalytic subunit, a SAPS domain-containing subunit (PP6R) and an ankyrin repeat-domain containing regulatory subunit (ARS). Interacts with PPP6C, PPP6R1 and PPP6R3. Interacts with PPP1C and HNRPK. Post-translationally, ubiquitinated by the ECS(RAB40C) complex leading to its degradation and decreased PP6 activity.

It localises to the nucleus. Its subcellular location is the nucleoplasm. The protein resides in the cytoplasm. It is found in the cytosol. The protein localises to the cell projection. It localises to the lamellipodium. Its function is as follows. Regulatory subunit of protein phosphatase 6 (PP6) that may be involved in the recognition of phosphoprotein substrates. Involved in the PP6-mediated dephosphorylation of NFKBIE opposing its degradation in response to TNF-alpha. Selectively inhibits the phosphatase activity of PPP1C. Targets PPP1C to modulate HNRPK phosphorylation. Involved in the PP6-mediated dephosphorylation of MOB1 and induced focal adhesion assembly during cell migration. This chain is Serine/threonine-protein phosphatase 6 regulatory ankyrin repeat subunit A, found in Homo sapiens (Human).